Consider the following 446-residue polypeptide: Scytalone dehydratase-like protein Arp1 (446 aa).

Tyr-323 is a binding site for substrate. Active-site residues include His-358 and His-383. Substrate is bound at residue Asn-404.

The protein belongs to the scytalone dehydratase family. As to quaternary structure, homotrimer. Each subunit contains an active site, located in the central part of the hydrophobic core of the monomer, which functions independently.

In terms of biological role, scytalone dehydratase-like protein; part of the Pks2 gene cluster that mediates the formation of infectious structures (appressoria), enabling these fungi to kill insects faster. The product of the Pks2 gene cluster is different from the one of Pks1 and has still not been identified. In Metarhizium acridum (strain CQMa 102), this protein is Scytalone dehydratase-like protein Arp1.